A 397-amino-acid polypeptide reads, in one-letter code: Acetate kinase (397 aa).

Asn7 lines the Mg(2+) pocket. Lys14 contacts ATP. Arg91 provides a ligand contact to substrate. Catalysis depends on Asp148, which acts as the Proton donor/acceptor. ATP contacts are provided by residues 208 to 212, 283 to 285, and 331 to 335; these read HLGNG, DFR, and GLGEN. Glu383 lines the Mg(2+) pocket.

This sequence belongs to the acetokinase family. Homodimer. Requires Mg(2+) as cofactor. Mn(2+) serves as cofactor.

The protein resides in the cytoplasm. The catalysed reaction is acetate + ATP = acetyl phosphate + ADP. It functions in the pathway metabolic intermediate biosynthesis; acetyl-CoA biosynthesis; acetyl-CoA from acetate: step 1/2. Catalyzes the formation of acetyl phosphate from acetate and ATP. Can also catalyze the reverse reaction. The sequence is that of Acetate kinase from Heliobacterium modesticaldum (strain ATCC 51547 / Ice1).